Here is a 2575-residue protein sequence, read N- to C-terminus: Non-reducing polyketide synthase pks11 (2575 aa).

Positions 89 to 228 (LANIILSPLV…ASKTVSTLQG (140 aa)) constitute a Starter acyltransferase (SAT) domain. Cys-129 serves as the catalytic Nucleophile; for transacylase activity. Catalysis depends on His-247, which acts as the Proton donor/acceptor; for transacylase activity. One can recognise a Ketosynthase family 3 (KS3) domain in the interval 373-790 (EDDIAVVGMS…GSNASAVVTE (418 aa)). Active-site for beta-ketoacyl synthase activity residues include Cys-538, His-673, and His-713. Residues 901-1192 (FGGQISTYVG…TNMASRALGS (292 aa)) form the Malonyl-CoA:ACP transacylase (MAT) domain. The segment at 1276 to 1409 (PKGLWSFIDY…GQIIFVSTDN (134 aa)) is N-terminal hotdog fold. The region spanning 1276–1586 (PKGLWSFIDY…YHKVAKATMS (311 aa)) is the PKS/mFAS DH domain. The product template (PT) domain stretch occupies residues 1307-1584 (LVSGHIIAQT…VNYHKVAKAT (278 aa)). The active-site Proton acceptor; for dehydratase activity is the His-1311. The C-terminal hotdog fold stretch occupies residues 1437–1586 (ADDIIQGRNI…YHKVAKATMS (150 aa)). The active-site Proton donor; for dehydratase activity is Asp-1493. Residues 1597–1606 (TTSTSTNVKS) are compositionally biased toward polar residues. Residues 1597–1636 (TTSTSTNVKSSPAAAEGSSPVENGASGSGSKAKKTKSGAG) are disordered. Residues 1637–1711 (QDVVNKTKGL…GLVQIIKSTL (75 aa)) enclose the Carrier domain. Ser-1671 bears the O-(pantetheine 4'-phosphoryl)serine mark. Positions 1713–1762 (VSDDEEGSDQEGSEASSSESSTTFTPSTTATTVSDVEDNGNEKSIGKEKS) are disordered. Residues 1714 to 1724 (SDDEEGSDQEG) are compositionally biased toward acidic residues. The segment covering 1725–1746 (SEASSSESSTTFTPSTTATTVS) has biased composition (low complexity). A compositionally biased stretch (basic and acidic residues) spans 1752-1762 (GNEKSIGKEKS). The tract at residues 1835 to 2130 (LTRIPHDPQH…HIDWTDGNSP (296 aa)) is methyltransferase domain. The Thioester reductase (TE) domain occupies 2204–2448 (ITGATGSLGS…LCWTPVDDVA (245 aa)).

Pantetheine 4'-phosphate is required as a cofactor.

The protein operates within secondary metabolite biosynthesis. In terms of biological role, non-reducing polyketide synthase; part of the gene cluster that mediates the biosynthesis of mitorubrinol and mitorubrinic acid, two virulence factors that improve T.marneffei intracellular survival in macrophages. The two polyketide synthases pks12 and pks11 are probably responsible for sequential use in the biosynthesis of mitorubrinol and mitorubrinic acid. The first part of the biosynthesis is probably catalyzed by pks12, which synthesized orsellinic acid. This tetraketide is then used as a starter unit for pks11, which possesses a SAT domain, in the second part of the biosynthesis. Pks11, contains a methyltransferase domain, also served that methylates the products, using a methyl group from S-adenosylmethionine. The protein is Non-reducing polyketide synthase pks11 of Talaromyces marneffei (Penicillium marneffei).